A 236-amino-acid polypeptide reads, in one-letter code: Hydroxyacylglutathione hydrolase (236 aa).

Residues H52, H54, D56, H57, H108, D125, and H163 each contribute to the Zn(2+) site.

It belongs to the metallo-beta-lactamase superfamily. Glyoxalase II family. Monomer. Zn(2+) is required as a cofactor.

The catalysed reaction is an S-(2-hydroxyacyl)glutathione + H2O = a 2-hydroxy carboxylate + glutathione + H(+). The protein operates within secondary metabolite metabolism; methylglyoxal degradation; (R)-lactate from methylglyoxal: step 2/2. In terms of biological role, thiolesterase that catalyzes the hydrolysis of S-D-lactoyl-glutathione to form glutathione and D-lactic acid. The chain is Hydroxyacylglutathione hydrolase from Mannheimia succiniciproducens (strain KCTC 0769BP / MBEL55E).